Here is a 175-residue protein sequence, read N- to C-terminus: Transcriptional repressor NrdR (175 aa).

A zinc finger lies at 3–32 (CPYCSHPDSKVIDSRDVDDGVRRRRECVVC). The region spanning 47–137 (LFVVKKDQRR…VYREFTDITQ (91 aa)) is the ATP-cone domain.

This sequence belongs to the NrdR family. Requires Zn(2+) as cofactor.

Its function is as follows. Negatively regulates transcription of bacterial ribonucleotide reductase nrd genes and operons by binding to NrdR-boxes. The chain is Transcriptional repressor NrdR from Dehalococcoides mccartyi (strain CBDB1).